A 676-amino-acid chain; its full sequence is uncharacterized protein (676 aa).

This is an uncharacterized protein from Magallana gigas (Pacific oyster).